The sequence spans 658 residues: DNA mismatch repair protein MutL (658 aa).

The span at 114–130 (RQEDSSHATQVKAEDGK) shows a compositional bias: basic and acidic residues. The tract at residues 114–137 (RQEDSSHATQVKAEDGKLSSPTAA) is disordered.

This sequence belongs to the DNA mismatch repair MutL/HexB family.

Its function is as follows. This protein is involved in the repair of mismatches in DNA. It is required for dam-dependent methyl-directed DNA mismatch repair. May act as a 'molecular matchmaker', a protein that promotes the formation of a stable complex between two or more DNA-binding proteins in an ATP-dependent manner without itself being part of a final effector complex. The sequence is that of DNA mismatch repair protein MutL from Neisseria meningitidis serogroup C / serotype 2a (strain ATCC 700532 / DSM 15464 / FAM18).